The chain runs to 229 residues: Transmembrane emp24 domain-containing protein 5 (229 aa).

An N-terminal signal peptide occupies residues 1-27; the sequence is MGDKIWLPFPVLLLAALPPVLLPGAAG. Residues 28-196 are Lumenal-facing; that stretch reads FTPSLDSDFT…IQESNFDRVN (169 aa). A GOLD domain is found at 45 to 126; it reads KECFYQPMPL…EKVIFFELIL (82 aa). The chain crosses the membrane as a helical span at residues 197-217; it reads FWSMVNLVVMVVVSAIQVYML. The Cytoplasmic portion of the chain corresponds to 218-229; that stretch reads KSLFEDKRKSRT.

The protein belongs to the EMP24/GP25L family. Interacts with TMED9 and TMED10.

The protein localises to the endoplasmic reticulum membrane. The protein resides in the golgi apparatus. It localises to the cis-Golgi network membrane. It is found in the endoplasmic reticulum-Golgi intermediate compartment membrane. In terms of biological role, potential role in vesicular protein trafficking, mainly in the early secretory pathway. Required for the maintenance of the Golgi apparatus; involved in protein exchange between Golgi stacks during assembly. Probably not required for COPI-vesicle-mediated retrograde transport. This Homo sapiens (Human) protein is Transmembrane emp24 domain-containing protein 5 (TMED5).